The following is a 411-amino-acid chain: Kelch domain-containing protein 10 (411 aa).

Kelch repeat units lie at residues 72-133 (NLYV…LHGH), 135-186 (LLVF…IIHG), 187-239 (FLYV…HDGQ), 240-288 (RIYV…RRCH), 296-342 (EVFI…AVTP), and 345-388 (CMYI…YFPH).

This sequence belongs to the KLHDC10 family. In terms of assembly, component of a CRL2 E3 ubiquitin-protein ligase complex, also named ECS (Elongin BC-CUL2/5-SOCS-box protein) complex, composed of CUL2, Elongin BC (ELOB and ELOC), RBX1 and substrate-specific adapter KLHDC10.

It functions in the pathway protein modification; protein ubiquitination. Substrate-recognition component of a Cul2-RING (CRL2) E3 ubiquitin-protein ligase complex of the DesCEND (destruction via C-end degrons) pathway, which recognizes a C-degron located at the extreme C terminus of target proteins, leading to their ubiquitination and degradation. The C-degron recognized by the DesCEND pathway is usually a motif of less than ten residues and can be present in full-length proteins, truncated proteins or proteolytically cleaved forms. The CRL2(KLHDC10) complex specifically recognizes proteins with a proline-glycine (Pro-Gly) or an alanine tail (CAT tail) at the C-terminus, leading to their ubiquitination and degradation. The CRL2(KLHDC10) complex is involved in the ribosome-associated quality control (RQC) pathway, which mediates the extraction of incompletely synthesized nascent chains from stalled ribosomes: CRL2(KLHDC10) acts downstream of NEMF and recognizes CAT tails associated with stalled nascent chains, leading to their ubiquitination and degradation. The polypeptide is Kelch domain-containing protein 10 (Xenopus tropicalis (Western clawed frog)).